Consider the following 281-residue polypeptide: tRNA N(3)-cytidine methyltransferase METTL8, mitochondrial (281 aa).

The N-terminal 22 residues, 1-22 (MNVIWRSCICRLRQGKVPHRCQ), are a transit peptide targeting the mitochondrion. Lys80 is covalently cross-linked (Glycyl lysine isopeptide (Lys-Gly) (interchain with G-Cter in SUMO)). Positions 89 and 93 each coordinate S-adenosyl-L-methionine. A compositionally biased stretch (polar residues) spans 139-151 (RTQGTETHCQESF). Residues 139 to 180 (RTQGTETHCQESFVSPEPGSRGRSAPDPDLEEYSKGPGKTEP) form a disordered region. S-adenosyl-L-methionine is bound by residues Gly194, Asp220, and Asp246.

It belongs to the methyltransferase superfamily. METL family. Interacts with EP300. Absent in embryonic lung but is induced in a fibroblast cell line by stretch. In terms of tissue distribution, expressed in undifferentiated progenitor cells, while its expression is inhibited by stretch. As to expression, absent in undifferentiated embryonic lung mesenchymal cells, but expression is induced by stretch. Expressed in mature adipose tissue.

The protein resides in the mitochondrion. The protein localises to the cytoplasm. It is found in the nucleus. The catalysed reaction is cytidine(32) in tRNA(Ser) + S-adenosyl-L-methionine = N(3)-methylcytidine(32) in tRNA(Ser) + S-adenosyl-L-homocysteine + H(+). It carries out the reaction cytidine(32) in tRNA(Thr) + S-adenosyl-L-methionine = N(3)-methylcytidine(32) in tRNA(Thr) + S-adenosyl-L-homocysteine + H(+). It catalyses the reaction a cytidine in mRNA + S-adenosyl-L-methionine = an N(3)-methylcytidine in mRNA + S-adenosyl-L-homocysteine + H(+). Mitochondrial S-adenosyl-L-methionine-dependent methyltransferase that mediates N(3)-methylcytidine modification of residue 32 of the tRNA anticodon loop of mitochondrial tRNA(Ser)(UCN) and tRNA(Thr). N(3)-methylcytidine methylation modification regulates mitochondrial translation efficiency and is required for activity of the respiratory chain. N(3)-methylcytidine methylation of mitochondrial tRNA(Ser)(UCN) requires the formation of N(6)-dimethylallyladenosine(37) (i6A37) by TRIT1 as prerequisite. May also mediate N(3)-methylcytidine modification of mRNAs. The existence of N(3)-methylcytidine modification on mRNAs is however unclear, and additional evidences are required to confirm the role of the N(3)-methylcytidine-specific mRNA methyltransferase activity of METTL8 in vivo. In terms of biological role, overexpression in lung progenitor cells stimulates smooth muscle-specific gene expression and suppresses adipogenic gene expression. Functionally, stimulates adipogenesis. This chain is tRNA N(3)-cytidine methyltransferase METTL8, mitochondrial, found in Mus musculus (Mouse).